We begin with the raw amino-acid sequence, 65 residues long: Large ribosomal subunit protein bL35 (65 aa).

Belongs to the bacterial ribosomal protein bL35 family.

The protein is Large ribosomal subunit protein bL35 of Porphyromonas gingivalis (strain ATCC 33277 / DSM 20709 / CIP 103683 / JCM 12257 / NCTC 11834 / 2561).